Reading from the N-terminus, the 632-residue chain is tRNA uridine 5-carboxymethylaminomethyl modification enzyme MnmG (632 aa).

FAD contacts are provided by residues 13-18 (GGGHAG), valine 125, and serine 180. 273–287 (GPRYCPSIEDKVMRF) contributes to the NAD(+) binding site. FAD is bound at residue glutamine 370.

This sequence belongs to the MnmG family. Homodimer. Heterotetramer of two MnmE and two MnmG subunits. Requires FAD as cofactor.

Its subcellular location is the cytoplasm. Functionally, NAD-binding protein involved in the addition of a carboxymethylaminomethyl (cmnm) group at the wobble position (U34) of certain tRNAs, forming tRNA-cmnm(5)s(2)U34. The chain is tRNA uridine 5-carboxymethylaminomethyl modification enzyme MnmG from Proteus mirabilis (strain HI4320).